The chain runs to 550 residues: MNYLLLVSGLLSVWQPVFGSRCGESTIPFSLEILPSGHPVLGCARPTCFGWHPKGYQLPTTAKFSRLNRKLDGFLRDDSLFTYPFETDSSKIYKVQNSTCEPGFQSSKCDSKDQWVGGIEPETDAFQDVAYQCCTYAPLRESTDRNIATVSAGEIVIGGEVYQNESQYAFDYISNIEKSMDENGEVYYEVNIRRFACLDPHNADRRIDEVWSSENTIRKVNGQKPIAQQAPNVAVNAPIEAGTFDGEVVDGQTVVIEEIIAQQGFIVENETTVAPFAGPFQAQGFQPRFGAPQGFQPAFQQPPPQQFFPQNFQPVVQQPVQFPAQPVGYAPYAPAGWQLHYCFPADAEVNVYEKGVKRMDELEVGDWVQALHGKETTYSPVKYWLHRDPEQEAEFVEFLLENGESFTLTEKHLVFATDCQQNVKNLDDLNPTSTGKINIGECFFMAQPENASKFQKVQILDIQRVRKTGIYAPMTSLGHLLVNQIHTSCHSEIDHHLLQNSFFKHVLKLKNRISKYFWNEESNTEGNIGTSLNFLIEIFELIVPSKMISY.

The first 19 residues, 1–19 (MNYLLLVSGLLSVWQPVFG), serve as a signal peptide directing secretion.

This sequence belongs to the hedgehog family. Post-translationally, the C-terminal domain displays an autoproteolysis activity.

The protein localises to the secreted. The protein resides in the cell surface. It localises to the cell membrane. It is found in the extracellular space. Functionally, intercellular signal essential for a variety of patterning events during development. This is Warthog protein 8 (wrt-8) from Caenorhabditis elegans.